The primary structure comprises 295 residues: Bis(5'-nucleosyl)-tetraphosphatase, symmetrical (295 aa).

Residues 271-295 (LSIEHPRHTHTPRRKAKKRHKRSPK) are disordered. Residues 277–295 (RHTHTPRRKAKKRHKRSPK) show a composition bias toward basic residues.

Belongs to the Ap4A hydrolase family.

The enzyme catalyses P(1),P(4)-bis(5'-adenosyl) tetraphosphate + H2O = 2 ADP + 2 H(+). Hydrolyzes diadenosine 5',5'''-P1,P4-tetraphosphate to yield ADP. This is Bis(5'-nucleosyl)-tetraphosphatase, symmetrical from Xylella fastidiosa (strain M23).